The chain runs to 410 residues: Class E basic helix-loop-helix protein 41 (410 aa).

Lys-31 is covalently cross-linked (Glycyl lysine isopeptide (Lys-Gly) (interchain with G-Cter in SUMO2)). The bHLH domain maps to 44–99 (TYKLPHRLIEKKRRDRINECIAQLKDLLPEHLKLTTLGHLEKAVVLELTLKHLKAL). Residue Lys-121 forms a Glycyl lysine isopeptide (Lys-Gly) (interchain with G-Cter in SUMO2) linkage. Residues 131 to 166 (FHSGFQTCAKEVLQYLARFESWTPREPRCAQLVSHL) enclose the Orange domain. Disordered stretches follow at residues 209 to 255 (IQRT…KRPK) and 360 to 410 (GATA…KDAP). A Glycyl lysine isopeptide (Lys-Gly) (interchain with G-Cter in SUMO2) cross-link involves residue Lys-240.

Homodimer. Heterodimer with BHLHE40/DEC1. Interacts with CIART. Interacts with BMAL1. Interacts with RXRA. Interacts with NR0B2 and HNF1A. Expressed in skeletal muscle, brain and lung.

The protein localises to the nucleus. In terms of biological role, transcriptional repressor involved in the regulation of the circadian rhythm by negatively regulating the activity of the clock genes and clock-controlled genes. Acts as the negative limb of a novel autoregulatory feedback loop (DEC loop) which differs from the one formed by the PER and CRY transcriptional repressors (PER/CRY loop). Both these loops are interlocked as it represses the expression of PER1 and in turn is repressed by PER1/2 and CRY1/2. Represses the activity of the circadian transcriptional activator: CLOCK-BMAL1 heterodimer by competing for the binding to E-box elements (5'-CACGTG-3') found within the promoters of its target genes. Negatively regulates its own expression and the expression of DBP and BHLHE41/DEC2. Acts as a corepressor of RXR and the RXR-LXR heterodimers and represses the ligand-induced RXRA/B/G, NR1H3/LXRA, NR1H4 and VDR transactivation activity. Inhibits HNF1A-mediated transactivation of CYP1A2, CYP2E1 and CYP3A11. The chain is Class E basic helix-loop-helix protein 41 (Bhlhe41) from Mus musculus (Mouse).